A 122-amino-acid chain; its full sequence is Large ribosomal subunit protein uL14 (122 aa).

Belongs to the universal ribosomal protein uL14 family. As to quaternary structure, part of the 50S ribosomal subunit. Forms a cluster with proteins L3 and L19. In the 70S ribosome, L14 and L19 interact and together make contacts with the 16S rRNA in bridges B5 and B8.

In terms of biological role, binds to 23S rRNA. Forms part of two intersubunit bridges in the 70S ribosome. The chain is Large ribosomal subunit protein uL14 from Cereibacter sphaeroides (strain ATCC 17029 / ATH 2.4.9) (Rhodobacter sphaeroides).